A 99-amino-acid polypeptide reads, in one-letter code: Aspartyl/glutamyl-tRNA(Asn/Gln) amidotransferase subunit C (99 aa).

This sequence belongs to the GatC family. In terms of assembly, heterotrimer of A, B and C subunits.

The enzyme catalyses L-glutamyl-tRNA(Gln) + L-glutamine + ATP + H2O = L-glutaminyl-tRNA(Gln) + L-glutamate + ADP + phosphate + H(+). It catalyses the reaction L-aspartyl-tRNA(Asn) + L-glutamine + ATP + H2O = L-asparaginyl-tRNA(Asn) + L-glutamate + ADP + phosphate + 2 H(+). Allows the formation of correctly charged Asn-tRNA(Asn) or Gln-tRNA(Gln) through the transamidation of misacylated Asp-tRNA(Asn) or Glu-tRNA(Gln) in organisms which lack either or both of asparaginyl-tRNA or glutaminyl-tRNA synthetases. The reaction takes place in the presence of glutamine and ATP through an activated phospho-Asp-tRNA(Asn) or phospho-Glu-tRNA(Gln). The chain is Aspartyl/glutamyl-tRNA(Asn/Gln) amidotransferase subunit C from Polaromonas sp. (strain JS666 / ATCC BAA-500).